The sequence spans 459 residues: Ribosomal protein uS12 methylthiotransferase RimO (459 aa).

The tract at residues 1–28 (MSTNPPDLRPDLAPKARLTQPDRPGQPT) is disordered. The MTTase N-terminal domain maps to 27–137 (PTIGMVSLGC…VLDAVHAAVP (111 aa)). Residues Cys36, Cys72, Cys101, Cys168, Cys172, and Cys175 each coordinate [4Fe-4S] cluster. A Radical SAM core domain is found at 154–387 (LTPRHFSYLK…MAKSQDISEA (234 aa)). One can recognise a TRAM domain in the interval 390 to 457 (AAKVAQRLEV…EYDLWGRLAP (68 aa)).

The protein belongs to the methylthiotransferase family. RimO subfamily. The cofactor is [4Fe-4S] cluster.

The protein resides in the cytoplasm. It catalyses the reaction L-aspartate(89)-[ribosomal protein uS12]-hydrogen + (sulfur carrier)-SH + AH2 + 2 S-adenosyl-L-methionine = 3-methylsulfanyl-L-aspartate(89)-[ribosomal protein uS12]-hydrogen + (sulfur carrier)-H + 5'-deoxyadenosine + L-methionine + A + S-adenosyl-L-homocysteine + 2 H(+). In terms of biological role, catalyzes the methylthiolation of an aspartic acid residue of ribosomal protein uS12. The protein is Ribosomal protein uS12 methylthiotransferase RimO of Roseobacter denitrificans (strain ATCC 33942 / OCh 114) (Erythrobacter sp. (strain OCh 114)).